Reading from the N-terminus, the 272-residue chain is NH(3)-dependent NAD(+) synthetase (272 aa).

45-52 contacts ATP; it reads GISGGQDS. Aspartate 51 serves as a coordination point for Mg(2+). Arginine 138 lines the deamido-NAD(+) pocket. Position 158 (threonine 158) interacts with ATP. Residue glutamate 163 participates in Mg(2+) binding. Deamido-NAD(+) contacts are provided by lysine 171 and aspartate 178. 2 residues coordinate ATP: lysine 187 and threonine 209. 258–259 is a deamido-NAD(+) binding site; that stretch reads HK.

The protein belongs to the NAD synthetase family. In terms of assembly, homodimer.

It carries out the reaction deamido-NAD(+) + NH4(+) + ATP = AMP + diphosphate + NAD(+) + H(+). The protein operates within cofactor biosynthesis; NAD(+) biosynthesis; NAD(+) from deamido-NAD(+) (ammonia route): step 1/1. In terms of biological role, catalyzes the ATP-dependent amidation of deamido-NAD to form NAD. Uses ammonia as a nitrogen source. The sequence is that of NH(3)-dependent NAD(+) synthetase from Bacillus cereus (strain AH187).